We begin with the raw amino-acid sequence, 360 residues long: 3-isopropylmalate dehydrogenase (360 aa).

76–89 provides a ligand contact to NAD(+); sequence GPKWEPLDYSLRPE. Substrate contacts are provided by arginine 96, arginine 106, arginine 134, and aspartate 224. 3 residues coordinate Mg(2+): aspartate 224, aspartate 248, and aspartate 252. 282–294 provides a ligand contact to NAD(+); it reads GSAPDIAGRGIAN.

Belongs to the isocitrate and isopropylmalate dehydrogenases family. LeuB type 1 subfamily. As to quaternary structure, homodimer. The cofactor is Mg(2+). Requires Mn(2+) as cofactor.

The protein resides in the cytoplasm. It carries out the reaction (2R,3S)-3-isopropylmalate + NAD(+) = 4-methyl-2-oxopentanoate + CO2 + NADH. The protein operates within amino-acid biosynthesis; L-leucine biosynthesis; L-leucine from 3-methyl-2-oxobutanoate: step 3/4. Catalyzes the oxidation of 3-carboxy-2-hydroxy-4-methylpentanoate (3-isopropylmalate) to 3-carboxy-4-methyl-2-oxopentanoate. The product decarboxylates to 4-methyl-2 oxopentanoate. This chain is 3-isopropylmalate dehydrogenase, found in Methylococcus capsulatus (strain ATCC 33009 / NCIMB 11132 / Bath).